The chain runs to 430 residues: Adenylosuccinate synthetase (430 aa).

GTP-binding positions include 13–19 (GDEGKGK) and 41–43 (GHT). The active-site Proton acceptor is the Asp-14. Mg(2+) is bound by residues Asp-14 and Gly-41. IMP is bound by residues 14–17 (DEGK), 39–42 (NAGH), Thr-130, Arg-144, Gln-225, Thr-240, and Arg-304. His-42 functions as the Proton donor in the catalytic mechanism. Residue 300-306 (ASTGRPR) coordinates substrate. Residues Arg-306, 332 to 334 (KLD), and 414 to 416 (STG) each bind GTP.

It belongs to the adenylosuccinate synthetase family. In terms of assembly, homodimer. Requires Mg(2+) as cofactor.

It is found in the cytoplasm. The enzyme catalyses IMP + L-aspartate + GTP = N(6)-(1,2-dicarboxyethyl)-AMP + GDP + phosphate + 2 H(+). It participates in purine metabolism; AMP biosynthesis via de novo pathway; AMP from IMP: step 1/2. Functionally, plays an important role in the de novo pathway of purine nucleotide biosynthesis. Catalyzes the first committed step in the biosynthesis of AMP from IMP. In Stenotrophomonas maltophilia (strain R551-3), this protein is Adenylosuccinate synthetase.